The following is a 483-amino-acid chain: MAYQGIDLLSTKAAGDDHGENSSYFDGWKAYDTNPFDLRHNRGGVIQMGLAENQLSLDLIEEWSKNHPEASICTPEGVSQFKRIANFQDYHGLPEFRKAMAQFMGQVRGGKATFDPDRVVMSGGATGAQETLAFCLANPGEAFLVPTPYYPAFDRDCCWRSGIKLLPIECHSFNDFRLTKEALVSAYDGARRQGISVKGILITNPSNPLGTITDRDTLAMLATFATEHRVHLVCDEIYAGSVFATPEYVSIAEVIERDVPWCNRDLIHVVYSLSKDFGLPGFRVGIIYSYNDAVVAAARRMSSFGLVSSQTQYFLARMLSDEEFIGRFLQESKCRLVARHERFTSGLREVGIGCLRGNAGLFSWMDLRRMLREKTAEAELELWRVIVHQVKLNVSPGTSFHCREPGWFRVCHANMDDETMEVALGRIHDFVRQHQQRRVKAERWAANRQLRLSLPHHHHLSPAHLSSPLALLSPQSPMVRATS.

Lys275 bears the N6-(pyridoxal phosphate)lysine mark.

Belongs to the class-I pyridoxal-phosphate-dependent aminotransferase family. Pyridoxal 5'-phosphate is required as a cofactor.

It catalyses the reaction S-adenosyl-L-methionine = 1-aminocyclopropane-1-carboxylate + S-methyl-5'-thioadenosine + H(+). It participates in alkene biosynthesis; ethylene biosynthesis via S-adenosyl-L-methionine; ethylene from S-adenosyl-L-methionine: step 1/2. Functionally, catalyzes the formation of 1-aminocyclopropane-1-carboxylate, a direct precursor of ethylene in higher plants. Involved in defense response by producing ethylene after pathogen infection. Involved in several phosphate deficiency-induced adaptive responses, such as lateral root elongation. This chain is 1-aminocyclopropane-1-carboxylate synthase 2, found in Oryza sativa subsp. japonica (Rice).